The chain runs to 294 residues: Phosphatidylserine decarboxylase proenzyme (294 aa).

Residues Asp-88, His-145, and Ser-248 each act as charge relay system; for autoendoproteolytic cleavage activity in the active site. Ser-248 (schiff-base intermediate with substrate; via pyruvic acid; for decarboxylase activity) is an active-site residue. Ser-248 is modified (pyruvic acid (Ser); by autocatalysis).

The protein belongs to the phosphatidylserine decarboxylase family. PSD-B subfamily. Prokaryotic type I sub-subfamily. As to quaternary structure, heterodimer of a large membrane-associated beta subunit and a small pyruvoyl-containing alpha subunit. The cofactor is pyruvate. In terms of processing, is synthesized initially as an inactive proenzyme. Formation of the active enzyme involves a self-maturation process in which the active site pyruvoyl group is generated from an internal serine residue via an autocatalytic post-translational modification. Two non-identical subunits are generated from the proenzyme in this reaction, and the pyruvate is formed at the N-terminus of the alpha chain, which is derived from the carboxyl end of the proenzyme. The autoendoproteolytic cleavage occurs by a canonical serine protease mechanism, in which the side chain hydroxyl group of the serine supplies its oxygen atom to form the C-terminus of the beta chain, while the remainder of the serine residue undergoes an oxidative deamination to produce ammonia and the pyruvoyl prosthetic group on the alpha chain. During this reaction, the Ser that is part of the protease active site of the proenzyme becomes the pyruvoyl prosthetic group, which constitutes an essential element of the active site of the mature decarboxylase.

The protein resides in the cell membrane. It carries out the reaction a 1,2-diacyl-sn-glycero-3-phospho-L-serine + H(+) = a 1,2-diacyl-sn-glycero-3-phosphoethanolamine + CO2. It functions in the pathway phospholipid metabolism; phosphatidylethanolamine biosynthesis; phosphatidylethanolamine from CDP-diacylglycerol: step 2/2. Functionally, catalyzes the formation of phosphatidylethanolamine (PtdEtn) from phosphatidylserine (PtdSer). This is Phosphatidylserine decarboxylase proenzyme from Herminiimonas arsenicoxydans.